We begin with the raw amino-acid sequence, 335 residues long: Glutamyl-tRNA reductase (335 aa).

Substrate is bound by residues 60–63 (TCHR), serine 110, 115–117 (ETE), and glutamine 121. The active-site Nucleophile is the cysteine 61. 189–194 (GYSEIN) lines the NADP(+) pocket.

It belongs to the glutamyl-tRNA reductase family. In terms of assembly, homodimer.

The catalysed reaction is (S)-4-amino-5-oxopentanoate + tRNA(Glu) + NADP(+) = L-glutamyl-tRNA(Glu) + NADPH + H(+). Its pathway is porphyrin-containing compound metabolism; protoporphyrin-IX biosynthesis; 5-aminolevulinate from L-glutamyl-tRNA(Glu): step 1/2. Catalyzes the NADPH-dependent reduction of glutamyl-tRNA(Glu) to glutamate 1-semialdehyde (GSA). This is Glutamyl-tRNA reductase from Chlamydia trachomatis serovar A (strain ATCC VR-571B / DSM 19440 / HAR-13).